A 683-amino-acid chain; its full sequence is DNA ligase (683 aa).

NAD(+) contacts are provided by residues 35 to 39 (DTEYD), 84 to 85 (SL), and glutamate 116. Lysine 118 functions as the N6-AMP-lysine intermediate in the catalytic mechanism. Positions 139, 176, 293, and 317 each coordinate NAD(+). Zn(2+) is bound by residues cysteine 419, cysteine 422, cysteine 437, and cysteine 443. The 82-residue stretch at 602–683 (AGPQLLAGKT…LMKLLAKGVE (82 aa)) folds into the BRCT domain.

It belongs to the NAD-dependent DNA ligase family. LigA subfamily. Mg(2+) serves as cofactor. Requires Mn(2+) as cofactor.

It carries out the reaction NAD(+) + (deoxyribonucleotide)n-3'-hydroxyl + 5'-phospho-(deoxyribonucleotide)m = (deoxyribonucleotide)n+m + AMP + beta-nicotinamide D-nucleotide.. Functionally, DNA ligase that catalyzes the formation of phosphodiester linkages between 5'-phosphoryl and 3'-hydroxyl groups in double-stranded DNA using NAD as a coenzyme and as the energy source for the reaction. It is essential for DNA replication and repair of damaged DNA. In Dechloromonas aromatica (strain RCB), this protein is DNA ligase.